The primary structure comprises 393 residues: Pre-mRNA splicing factor SR-like 1 (393 aa).

Residues 173-393 are disordered; the sequence is MNLPTKPSGS…VIKLGGSSWR (221 aa). Over residues 249–312 the composition is skewed to basic and acidic residues; that stretch reads QSRDYYSDRD…RNDYEDDRSR (64 aa). Residues 301–308 carry the Nuclear localization signal motif; the sequence is SRRNDYED. Residues 313 to 325 are compositionally biased toward basic residues; the sequence is HDRRSRSRSRSRS. Composition is skewed to basic and acidic residues over residues 329–346 and 356–385; these read QIEREPTPKRDSSNKEKS and KLKDLYGDASSQKRDEGFGTRKDSSSEEVI.

Belongs to the PRP38 family. Post-translationally, phosphorylated. Mostly expressed in siliques and leaves, also present in seedlings, flowers and stems, and, at low levels, in roots.

The protein resides in the nucleus. Its function is as follows. May be required for pre-mRNA splicing. Confers salt tolerance to LiCl and NaCl. The polypeptide is Pre-mRNA splicing factor SR-like 1 (Arabidopsis thaliana (Mouse-ear cress)).